A 150-amino-acid polypeptide reads, in one-letter code: Transcriptional repressor NrdR (150 aa).

The segment at 3 to 34 (CPFCGYEDTFVIDTREIEDQRVIRRRRECPNC) is a zinc-finger region. The ATP-cone domain occupies 49-139 (IMVIKKDGRR…VYQEFSSLEE (91 aa)).

This sequence belongs to the NrdR family. Requires Zn(2+) as cofactor.

Its function is as follows. Negatively regulates transcription of bacterial ribonucleotide reductase nrd genes and operons by binding to NrdR-boxes. This chain is Transcriptional repressor NrdR, found in Dictyoglomus thermophilum (strain ATCC 35947 / DSM 3960 / H-6-12).